A 212-amino-acid polypeptide reads, in one-letter code: Ropporin-1 (212 aa).

Positions 12–49 constitute an RIIa domain; that stretch reads PELPKMLKEFAKAAIRAQPQDLIQWGADYFEALSRGET. Serine 56 carries the phosphoserine modification. Residues 209–212 are interaction with RHPN1; sequence VWLE.

This sequence belongs to the ropporin family. In terms of assembly, homodimer. Interacts with AKAP3. May interact with SPA17. Interacts with RHPN1. Interacts with FSCB; the interaction increases upon spermatozoa capacitation conditions. Interacts with CFAP61. Post-translationally, sumoylated, sumoylation decreases upon spermatozoa capacitation conditions.

The protein resides in the cell projection. It localises to the cilium. The protein localises to the flagellum. Its function is as follows. Important for male fertility. With ROPN1L, involved in fibrous sheath integrity and sperm motility, plays a role in PKA-dependent signaling processes required for spermatozoa capacitation. The polypeptide is Ropporin-1 (ROPN1) (Macaca fascicularis (Crab-eating macaque)).